Reading from the N-terminus, the 530-residue chain is MARLCTHTESGHYLMALDAGTGSVRAVIFDLQGKQIAVGQAEWQHLAVPDVPGSMEFDLAKNWQLACQCIRQALQKAAIPATAIAAVSACSMREGIVIYDSNGEPIWACANVDARAAHEVSELKELYDNTFEEEVYRCSGQTLALSAIPRLLWLAHHRPDIYHRASTVTMISDWMAFMLSGELAVDPSNAGTTGLLDLVTRNWKRSLLQMAGLRSDILSPVKETGTLLGHISQKAAEQCDLQAGTPVIVGGGDVQLGCLGLGVVRPAQTAVLGGTFWQQVVNLPAPVTDPNMNVRINPHVIPGMVQTESISFFTGLTMRWFRDAFCAEEKLIAERLGIDAYSLLEDMASRVPPGAYGVMPIFSDVMRFKRWYHAAPSFINLSIDPEKCNKATLFRALEENAAIVSACNLQQIAAFSGVQADSLVFAGGGSKGKLWSQILADVTGLTVHVPVVKEATALGCAIAAGVGVGVWPSLAETGEKLVRWDREHKPNPENFAVYQQAREKWQAVYQDQRALVDGGLTTSLWKAPGL.

This sequence belongs to the FGGY kinase family.

The protein resides in the cytoplasm. It catalyses the reaction (S)-4,5-dihydroxypentane-2,3-dione + ATP = (2S)-2-hydroxy-3,4-dioxopentyl phosphate + ADP + H(+). In terms of biological role, catalyzes the phosphorylation of autoinducer-2 (AI-2) to phospho-AI-2, which subsequently inactivates the transcriptional regulator LsrR and leads to the transcription of the lsr operon. Phosphorylates the ring-open form of (S)-4,5-dihydroxypentane-2,3-dione (DPD), which is the precursor to all AI-2 signaling molecules, at the C5 position. The protein is Autoinducer-2 kinase of Salmonella typhimurium (strain LT2 / SGSC1412 / ATCC 700720).